Reading from the N-terminus, the 355-residue chain is RNA 3'-terminal phosphate cyclase (355 aa).

Residues Q100 and 300-304 (HLADQ) each bind ATP. Residue H325 is the Tele-AMP-histidine intermediate of the active site.

The protein belongs to the RNA 3'-terminal cyclase family. Type 1 subfamily.

It localises to the cytoplasm. The catalysed reaction is a 3'-end 3'-phospho-ribonucleotide-RNA + ATP = a 3'-end 2',3'-cyclophospho-ribonucleotide-RNA + AMP + diphosphate. Its function is as follows. Catalyzes the conversion of 3'-phosphate to a 2',3'-cyclic phosphodiester at the end of RNA. The mechanism of action of the enzyme occurs in 3 steps: (A) adenylation of the enzyme by ATP; (B) transfer of adenylate to an RNA-N3'P to produce RNA-N3'PP5'A; (C) and attack of the adjacent 2'-hydroxyl on the 3'-phosphorus in the diester linkage to produce the cyclic end product. The biological role of this enzyme is unknown but it is likely to function in some aspects of cellular RNA processing. The protein is RNA 3'-terminal phosphate cyclase of Methanosarcina acetivorans (strain ATCC 35395 / DSM 2834 / JCM 12185 / C2A).